Reading from the N-terminus, the 341-residue chain is Shk1 kinase-binding protein 15 (341 aa).

5 WD repeats span residues 33–70, 77–114, 119–157, 197–234, and 237–274; these read AHEG…QIAD, IANA…LVHT, SHKG…GGKV, SSKS…ILHE, and AHKK…VIEH. A disordered region spans residues 293-341; that stretch reads NSEPKNVEDEAAKRQSLDSETSETSSESESESEYYSTSKQPPVKRTKHA. Basic and acidic residues predominate over residues 297–309; that stretch reads KNVEDEAAKRQSL.

In terms of biological role, negatively regulates pak1/shk1 kinase activity leading to proper execution of cytoskeletal remodeling and cytokinetic functions. Functionally, interacts with pak1/shk1. This chain is Shk1 kinase-binding protein 15 (skb15), found in Schizosaccharomyces pombe (strain 972 / ATCC 24843) (Fission yeast).